The primary structure comprises 157 residues: 6,7-dimethyl-8-ribityllumazine synthase (157 aa).

5-amino-6-(D-ribitylamino)uracil contacts are provided by residues phenylalanine 22, 56-58 (AFE), and 81-83 (VLI). 86–87 (ET) serves as a coordination point for (2S)-2-hydroxy-3-oxobutyl phosphate. The Proton donor role is filled by histidine 89. Residue phenylalanine 114 coordinates 5-amino-6-(D-ribitylamino)uracil. (2S)-2-hydroxy-3-oxobutyl phosphate is bound at residue arginine 128.

It belongs to the DMRL synthase family.

It carries out the reaction (2S)-2-hydroxy-3-oxobutyl phosphate + 5-amino-6-(D-ribitylamino)uracil = 6,7-dimethyl-8-(1-D-ribityl)lumazine + phosphate + 2 H2O + H(+). It functions in the pathway cofactor biosynthesis; riboflavin biosynthesis; riboflavin from 2-hydroxy-3-oxobutyl phosphate and 5-amino-6-(D-ribitylamino)uracil: step 1/2. Catalyzes the formation of 6,7-dimethyl-8-ribityllumazine by condensation of 5-amino-6-(D-ribitylamino)uracil with 3,4-dihydroxy-2-butanone 4-phosphate. This is the penultimate step in the biosynthesis of riboflavin. The protein is 6,7-dimethyl-8-ribityllumazine synthase of Chlamydia trachomatis serovar L2 (strain ATCC VR-902B / DSM 19102 / 434/Bu).